Reading from the N-terminus, the 209-residue chain is Small ribosomal subunit protein uS4 (209 aa).

An S4 RNA-binding domain is found at 99 to 164; it reads GRLDSVVYRM…QLRVKAALEA (66 aa).

Belongs to the universal ribosomal protein uS4 family. As to quaternary structure, part of the 30S ribosomal subunit. Contacts protein S5. The interaction surface between S4 and S5 is involved in control of translational fidelity.

One of the primary rRNA binding proteins, it binds directly to 16S rRNA where it nucleates assembly of the body of the 30S subunit. Its function is as follows. With S5 and S12 plays an important role in translational accuracy. This chain is Small ribosomal subunit protein uS4, found in Aromatoleum aromaticum (strain DSM 19018 / LMG 30748 / EbN1) (Azoarcus sp. (strain EbN1)).